We begin with the raw amino-acid sequence, 90 residues long: Small ribosomal subunit protein bS20 (90 aa).

It belongs to the bacterial ribosomal protein bS20 family.

Its function is as follows. Binds directly to 16S ribosomal RNA. This Francisella tularensis subsp. tularensis (strain FSC 198) protein is Small ribosomal subunit protein bS20.